A 166-amino-acid polypeptide reads, in one-letter code: Regulatory protein RecX (166 aa).

It belongs to the RecX family.

The protein localises to the cytoplasm. In terms of biological role, modulates RecA activity. This Salmonella choleraesuis (strain SC-B67) protein is Regulatory protein RecX.